We begin with the raw amino-acid sequence, 124 residues long: MRRQEALVVTAGTASEASRDGEQPRPAGLVCRARVEPGGPQESRQQWKTFLYCEPHKRIKEVLEEELSIKRDECHVKSPTAVALDGIWSIRRNLPVGGMIPGQQSRNCSLPQTKYYSRHGGLRR.

Disordered stretches follow at residues Met1–Pro26 and Ile100–Arg124. Over residues Gly102–Tyr115 the composition is skewed to polar residues.

The protein resides in the cytoplasm. The protein localises to the cytoskeleton. Its subcellular location is the cilium basal body. This is an uncharacterized protein from Rattus norvegicus (Rat).